We begin with the raw amino-acid sequence, 492 residues long: Glutamyl-tRNA(Gln) amidotransferase subunit A (492 aa).

Residues lysine 81 and serine 156 each act as charge relay system in the active site. Serine 180 serves as the catalytic Acyl-ester intermediate.

Belongs to the amidase family. GatA subfamily. As to quaternary structure, heterotrimer of A, B and C subunits.

The catalysed reaction is L-glutamyl-tRNA(Gln) + L-glutamine + ATP + H2O = L-glutaminyl-tRNA(Gln) + L-glutamate + ADP + phosphate + H(+). Functionally, allows the formation of correctly charged Gln-tRNA(Gln) through the transamidation of misacylated Glu-tRNA(Gln) in organisms which lack glutaminyl-tRNA synthetase. The reaction takes place in the presence of glutamine and ATP through an activated gamma-phospho-Glu-tRNA(Gln). This chain is Glutamyl-tRNA(Gln) amidotransferase subunit A, found in Rhodococcus erythropolis (strain PR4 / NBRC 100887).